The chain runs to 698 residues: Elongation factor G 2 (698 aa).

A tr-type G domain is found at 8–290 (ERYRNIGIMA…AVVDYLPSPV (283 aa)). Residues 17-24 (AHIDAGKT), 88-92 (DTPGH), and 142-145 (NKMD) each bind GTP.

It belongs to the TRAFAC class translation factor GTPase superfamily. Classic translation factor GTPase family. EF-G/EF-2 subfamily.

It localises to the cytoplasm. In terms of biological role, catalyzes the GTP-dependent ribosomal translocation step during translation elongation. During this step, the ribosome changes from the pre-translocational (PRE) to the post-translocational (POST) state as the newly formed A-site-bound peptidyl-tRNA and P-site-bound deacylated tRNA move to the P and E sites, respectively. Catalyzes the coordinated movement of the two tRNA molecules, the mRNA and conformational changes in the ribosome. The protein is Elongation factor G 2 of Methylococcus capsulatus (strain ATCC 33009 / NCIMB 11132 / Bath).